Reading from the N-terminus, the 381-residue chain is Ceropsin (381 aa).

Residues 1-62 (MSISMDAGPG…MNPLWHALLG (62 aa)) lie on the Extracellular side of the membrane. Asparagine 28 carries N-linked (GlcNAc...) asparagine glycosylation. The helical transmembrane segment at 63-83 (FTIGVLGFISMMGNGMVIYIF) threads the bilayer. At 84 to 96 (MTTKNLKTPSNLL) the chain is on the cytoplasmic side. Residues 97–117 (VVNLAFSDFLMMCAMSPAMVI) traverse the membrane as a helical segment. Over 118 to 133 (NCYNETWVFGPFACEL) the chain is Extracellular. The N-linked (GlcNAc...) asparagine glycan is linked to asparagine 121. A disulfide bond links cysteine 131 and cysteine 208. Residues 134–154 (YGCAGSLFGCASIWTMTMIAF) form a helical membrane-spanning segment. The Cytoplasmic segment spans residues 155 to 173 (DRYNVIVKGIAAKPMTNNG). The helical transmembrane segment at 174–194 (ALLRILGIWAFSLAWTVAPFF) threads the bilayer. Residues 195–221 (GWNRYVPEGNMTACGTDYLTKDWFSRS) are Extracellular-facing. An N-linked (GlcNAc...) asparagine glycan is attached at asparagine 204. A helical membrane pass occupies residues 222 to 242 (YIVVYSVFVYFAPLLLIVYSY). The Cytoplasmic segment spans residues 243–284 (YYIVQAVSAHEKAMREQAKKMNVASLRSSEAANTSTECKLAK). Residues 285-305 (VALMTISLWFMAWTPYLVINY) form a helical membrane-spanning segment. The Extracellular segment spans residues 306–316 (TGILESAPISP). Residues 317–339 (LATIWGSLFAKANAVYNPIVYGI) traverse the membrane as a helical segment. Topologically, residues 340-381 (SHPKYQAALYKRFPVLQCHSTTTDEASSVASGTTVMEEKPTA) are cytoplasmic.

This sequence belongs to the G-protein coupled receptor 1 family. Opsin subfamily. As to expression, expressed bilaterally in dorsal and ventral anterior protocerebral cells and bilaterally in the dorsal posterior protocerebral and lateral posterior tritocerebral cells (at protein level). Expressed in the larval brain but not in the subesophageal ganglion or thoracic ganglion.

It localises to the membrane. In terms of biological role, visual pigments are the light-absorbing molecules that mediate vision. They consist of an apoprotein, opsin, covalently linked to cis-retinal. May play a role in photoperiodic photoreception. The sequence is that of Ceropsin from Bombyx mori (Silk moth).